We begin with the raw amino-acid sequence, 196 residues long: UPF0056 membrane protein BUsg_434 (196 aa).

6 helical membrane-spanning segments follow: residues 8 to 28 (TILLILIMDPLGNLPIFMTIL), 45 to 65 (IIALIVMLIFLFVGEKILTIL), 71 to 91 (TVSISGGIILFLIAIKMIFPS), 105 to 125 (FLVPLAIPLVAGPSLLATLML), 134 to 154 (MPYLVGSLLIAWFFTIIILLL), and 174 to 194 (MGLILIMLSTQMFLDGIKAWF).

The protein belongs to the UPF0056 (MarC) family.

It is found in the cell membrane. This chain is UPF0056 membrane protein BUsg_434, found in Buchnera aphidicola subsp. Schizaphis graminum (strain Sg).